The primary structure comprises 619 residues: Dihydroxy-acid dehydratase (619 aa).

D81 provides a ligand contact to Mg(2+). Residue C122 coordinates [2Fe-2S] cluster. Mg(2+) contacts are provided by D123 and K124. N6-carboxylysine is present on K124. Residue C201 coordinates [2Fe-2S] cluster. E496 lines the Mg(2+) pocket. Catalysis depends on S522, which acts as the Proton acceptor.

This sequence belongs to the IlvD/Edd family. As to quaternary structure, homodimer. [2Fe-2S] cluster is required as a cofactor. Requires Mg(2+) as cofactor.

The enzyme catalyses (2R)-2,3-dihydroxy-3-methylbutanoate = 3-methyl-2-oxobutanoate + H2O. It carries out the reaction (2R,3R)-2,3-dihydroxy-3-methylpentanoate = (S)-3-methyl-2-oxopentanoate + H2O. The protein operates within amino-acid biosynthesis; L-isoleucine biosynthesis; L-isoleucine from 2-oxobutanoate: step 3/4. It functions in the pathway amino-acid biosynthesis; L-valine biosynthesis; L-valine from pyruvate: step 3/4. Functionally, functions in the biosynthesis of branched-chain amino acids. Catalyzes the dehydration of (2R,3R)-2,3-dihydroxy-3-methylpentanoate (2,3-dihydroxy-3-methylvalerate) into 2-oxo-3-methylpentanoate (2-oxo-3-methylvalerate) and of (2R)-2,3-dihydroxy-3-methylbutanoate (2,3-dihydroxyisovalerate) into 2-oxo-3-methylbutanoate (2-oxoisovalerate), the penultimate precursor to L-isoleucine and L-valine, respectively. The protein is Dihydroxy-acid dehydratase of Paracidovorax citrulli (strain AAC00-1) (Acidovorax citrulli).